We begin with the raw amino-acid sequence, 461 residues long: Ornithine decarboxylase (461 aa).

An N6-(pyridoxal phosphate)lysine modification is found at lysine 69. Pyridoxal 5'-phosphate-binding positions include serine 200, glycine 237, and 274–277 (EPGR). Serine 303 carries the phosphoserine; by CK2 modification. Position 331-332 (331-332 (YD)) interacts with substrate. The active-site Proton donor; shared with dimeric partner is the cysteine 360. An S-nitrosocysteine modification is found at cysteine 360. Aspartate 361 serves as a coordination point for substrate. Tyrosine 389 is a pyridoxal 5'-phosphate binding site.

The protein belongs to the Orn/Lys/Arg decarboxylase class-II family. As to quaternary structure, homodimer. Only the dimer is catalytically active, as the active sites are constructed of residues from both monomers. Does not form a heterodimer with AZIN2. The cofactor is pyridoxal 5'-phosphate. Expressed during testis development in the outer part of the seminiferous tubules.

It catalyses the reaction L-ornithine + H(+) = putrescine + CO2. It participates in amine and polyamine biosynthesis; putrescine biosynthesis via L-ornithine pathway; putrescine from L-ornithine: step 1/1. Its activity is regulated as follows. Inhibited by antizymes (AZs) OAZ1, OAZ2 and OAZ3 in response to polyamine levels. AZs inhibit the assembly of the functional homodimer by binding to ODC monomers. Additionally, OAZ1 targets ODC monomers for ubiquitin-independent proteolytic destruction by the 26S proteasome. Its function is as follows. Catalyzes the first and rate-limiting step of polyamine biosynthesis that converts ornithine into putrescine, which is the precursor for the polyamines, spermidine and spermine. Polyamines are essential for cell proliferation and are implicated in cellular processes, ranging from DNA replication to apoptosis. This is Ornithine decarboxylase (Odc1) from Mus musculus (Mouse).